Reading from the N-terminus, the 1065-residue chain is Carbamoyl phosphate synthase large chain (1065 aa).

Positions 1 to 401 (MPKRRDIETI…SLLKAVRSLE (401 aa)) are carboxyphosphate synthetic domain. The ATP site is built by arginine 129, arginine 169, glycine 175, glycine 176, arginine 208, isoleucine 210, glutamate 215, glycine 241, isoleucine 242, histidine 243, glutamine 284, and glutamate 298. One can recognise an ATP-grasp 1 domain in the interval 133–327 (RALMNELGEP…IAKLAAKIAV (195 aa)). 3 residues coordinate Mg(2+): glutamine 284, glutamate 298, and asparagine 300. Residues glutamine 284, glutamate 298, and asparagine 300 each contribute to the Mn(2+) site. The oligomerization domain stretch occupies residues 402 to 546 (IGVHHLELNE…YSTYEEENES (145 aa)). A carbamoyl phosphate synthetic domain region spans residues 547–929 (IVTEKPSVIV…ALYKGLVASG (383 aa)). The ATP-grasp 2 domain maps to 671-861 (EQALSELGIP…MANLATKAIL (191 aa)). Residues arginine 707, arginine 746, isoleucine 748, glutamate 752, glycine 777, valine 778, histidine 779, serine 780, glutamine 820, and glutamate 832 each contribute to the ATP site. 3 residues coordinate Mg(2+): glutamine 820, glutamate 832, and asparagine 834. 3 residues coordinate Mn(2+): glutamine 820, glutamate 832, and asparagine 834. An MGS-like domain is found at 930-1065 (IHIQPHGAVL…TAMTEGLVRS (136 aa)). The tract at residues 930-1065 (IHIQPHGAVL…TAMTEGLVRS (136 aa)) is allosteric domain.

Belongs to the CarB family. As to quaternary structure, composed of two chains; the small (or glutamine) chain promotes the hydrolysis of glutamine to ammonia, which is used by the large (or ammonia) chain to synthesize carbamoyl phosphate. Tetramer of heterodimers (alpha,beta)4. Mg(2+) serves as cofactor. Requires Mn(2+) as cofactor.

The enzyme catalyses hydrogencarbonate + L-glutamine + 2 ATP + H2O = carbamoyl phosphate + L-glutamate + 2 ADP + phosphate + 2 H(+). The catalysed reaction is hydrogencarbonate + NH4(+) + 2 ATP = carbamoyl phosphate + 2 ADP + phosphate + 2 H(+). The protein operates within amino-acid biosynthesis; L-arginine biosynthesis; carbamoyl phosphate from bicarbonate: step 1/1. It participates in pyrimidine metabolism; UMP biosynthesis via de novo pathway; (S)-dihydroorotate from bicarbonate: step 1/3. Functionally, large subunit of the glutamine-dependent carbamoyl phosphate synthetase (CPSase). CPSase catalyzes the formation of carbamoyl phosphate from the ammonia moiety of glutamine, carbonate, and phosphate donated by ATP, constituting the first step of 2 biosynthetic pathways, one leading to arginine and/or urea and the other to pyrimidine nucleotides. The large subunit (synthetase) binds the substrates ammonia (free or transferred from glutamine from the small subunit), hydrogencarbonate and ATP and carries out an ATP-coupled ligase reaction, activating hydrogencarbonate by forming carboxy phosphate which reacts with ammonia to form carbamoyl phosphate. This chain is Carbamoyl phosphate synthase large chain, found in Bacillus caldolyticus.